A 261-amino-acid chain; its full sequence is MMLLAIEQGNTNTMFAIHDGASWVAQWRSATESTRTADEYVVWLSQLLSMQGLGFRAIDAVIISSVVPQSIFNLRNLSRRYFNVEPLVIGENAKLGIDVRIEKPSEAGADRLVNAIGAAMVYPGPLVVIDSGTATTFDIVAADGAFEGGIIAPGINLSMQALHEAAAKLPRIAIQRPAGNRIVGTDTVSAMQSGVFWGYISLIEGLVARIKAERGEPMTVIATGGVASLFEGATDSIDHFDSDLTIRGLLEIYRRNTIAES.

7 to 14 provides a ligand contact to ATP; it reads EQGNTNTM. 108 to 111 provides a ligand contact to substrate; sequence GADR. The active-site Proton acceptor is Asp-110. Residue Asp-130 participates in K(+) binding. Residue Thr-133 coordinates ATP. Residue Thr-187 coordinates substrate.

Belongs to the type III pantothenate kinase family. As to quaternary structure, homodimer. NH4(+) is required as a cofactor. It depends on K(+) as a cofactor.

It is found in the cytoplasm. The enzyme catalyses (R)-pantothenate + ATP = (R)-4'-phosphopantothenate + ADP + H(+). It functions in the pathway cofactor biosynthesis; coenzyme A biosynthesis; CoA from (R)-pantothenate: step 1/5. Catalyzes the phosphorylation of pantothenate (Pan), the first step in CoA biosynthesis. This Caulobacter vibrioides (strain ATCC 19089 / CIP 103742 / CB 15) (Caulobacter crescentus) protein is Type III pantothenate kinase.